The sequence spans 159 residues: Probable cyclic pyranopterin monophosphate synthase accessory protein (159 aa).

Asp-128 is an active-site residue.

The protein belongs to the MoaC family.

Its pathway is cofactor biosynthesis; molybdopterin biosynthesis. Together with MoaA, is involved in the conversion of 5'-GTP to cyclic pyranopterin monophosphate (cPMP or molybdopterin precursor Z). In Methanothermobacter thermautotrophicus (strain ATCC 29096 / DSM 1053 / JCM 10044 / NBRC 100330 / Delta H) (Methanobacterium thermoautotrophicum), this protein is Probable cyclic pyranopterin monophosphate synthase accessory protein.